Consider the following 258-residue polypeptide: Aspartate/glutamate leucyltransferase (258 aa).

This sequence belongs to the R-transferase family. Bpt subfamily.

The protein resides in the cytoplasm. It carries out the reaction N-terminal L-glutamyl-[protein] + L-leucyl-tRNA(Leu) = N-terminal L-leucyl-L-glutamyl-[protein] + tRNA(Leu) + H(+). It catalyses the reaction N-terminal L-aspartyl-[protein] + L-leucyl-tRNA(Leu) = N-terminal L-leucyl-L-aspartyl-[protein] + tRNA(Leu) + H(+). Functionally, functions in the N-end rule pathway of protein degradation where it conjugates Leu from its aminoacyl-tRNA to the N-termini of proteins containing an N-terminal aspartate or glutamate. The polypeptide is Aspartate/glutamate leucyltransferase (Rhodopseudomonas palustris (strain ATCC BAA-98 / CGA009)).